Reading from the N-terminus, the 148-residue chain is Small ribosomal subunit protein eS12B (148 aa).

This sequence belongs to the eukaryotic ribosomal protein eS12 family. As to quaternary structure, component of the small ribosomal subunit (SSU). Mature yeast ribosomes consist of a small (40S) and a large (60S) subunit. The 40S small subunit contains 1 molecule of ribosomal RNA (18S rRNA) and at least 33 different proteins. The large 60S subunit contains 3 rRNA molecules (25S, 5.8S and 5S rRNA) and at least 46 different proteins.

It localises to the cytoplasm. Its function is as follows. Component of the ribosome, a large ribonucleoprotein complex responsible for the synthesis of proteins in the cell. The small ribosomal subunit (SSU) binds messenger RNAs (mRNAs) and translates the encoded message by selecting cognate aminoacyl-transfer RNA (tRNA) molecules. The large subunit (LSU) contains the ribosomal catalytic site termed the peptidyl transferase center (PTC), which catalyzes the formation of peptide bonds, thereby polymerizing the amino acids delivered by tRNAs into a polypeptide chain. The nascent polypeptides leave the ribosome through a tunnel in the LSU and interact with protein factors that function in enzymatic processing, targeting, and the membrane insertion of nascent chains at the exit of the ribosomal tunnel. This chain is Small ribosomal subunit protein eS12B (rps1202), found in Schizosaccharomyces pombe (strain 972 / ATCC 24843) (Fission yeast).